The sequence spans 2627 residues: Telomerase protein component 1 (2627 aa).

4 TEP1 N-terminal repeats span residues 1 to 30, 31 to 60, 61 to 90, and 91 to 120; these read MEKL…DLQP, LEKL…DLKT, MEKP…DLKT, and MEKP…SLKS. 2 disordered regions span residues 193–214 and 383–402; these read FDSE…SLGE and RKHR…GMEP. The region spanning 223 to 676 is the TROVE domain; the sequence is VKLTSGDSES…VKHSLPLLPG (454 aa). Positions 383–395 are enriched in basic residues; the sequence is RKHRAKRHPRRPP. The 329-residue stretch at 1162–1490 folds into the NACHT domain; that stretch reads RLSLVTGQSG…PLERPGARLC (329 aa). 1168-1175 contributes to the ATP binding site; that stretch reads GQSGQGKT. 19 WD repeats span residues 1411 to 1448, 1674 to 1713, 1716 to 1754, 1757 to 1796, 1798 to 1837, 1840 to 1879, 1882 to 1921, 1925 to 1964, 1967 to 2005, 2008 to 2047, 2059 to 2098, 2105 to 2143, 2146 to 2183, 2185 to 2233, 2236 to 2275, 2278 to 2317, 2319 to 2355, 2368 to 2417, and 2459 to 2500; these read VLPQ…TKSW, AVSS…EEKS, SGCD…RVLQ, AHQY…LAFQ, TYPK…VTKD, APGA…RLAA, AHHG…PRGH, LSLS…QGAQ, ALDV…LQSL, LSRF…RPHK, GHEG…TPVL, CHRD…RLGQ, GHQS…LTSI, AHSG…QTHT, GHSG…DDTC, RSSA…ATAQ, PGHI…GSAP, EDLG…PMIL, and NPSR…GEWT. The segment covering 2506-2522 has biased composition (polar residues); sequence QKKANTPETQTPGTDPS. The tract at residues 2506–2551 is disordered; it reads QKKANTPETQTPGTDPSTCRESDASMDSDASMDSEPTPHLKTRQRR. WD repeat units follow at residues 2553–2590 and 2592–2626; these read IHSG…LLGL and RCEG…FLNW.

In terms of assembly, associated component of the telomerase holoenzyme complex. Component of the vault ribonucleoprotein particle, at least composed of MVP, PARP4 and one or more vault RNAs (vRNAs). Binds to VAULTRC1, VAULTRC2 and VAULTRC4/hvg4 vRNAs. In terms of tissue distribution, ubiquitous.

It localises to the nucleus. It is found in the chromosome. Its subcellular location is the telomere. In terms of biological role, component of the telomerase ribonucleoprotein complex that is essential for the replication of chromosome termini. Also a component of the ribonucleoprotein vaults particle, a multi-subunit structure involved in nucleo-cytoplasmic transport. Responsible for the localizing and stabilizing vault RNA (vRNA) association in the vault ribonucleoprotein particle. Binds to TERC. This Homo sapiens (Human) protein is Telomerase protein component 1 (TEP1).